We begin with the raw amino-acid sequence, 186 residues long: Ribosome-recycling factor (186 aa).

Belongs to the RRF family.

The protein resides in the cytoplasm. In terms of biological role, responsible for the release of ribosomes from messenger RNA at the termination of protein biosynthesis. May increase the efficiency of translation by recycling ribosomes from one round of translation to another. The polypeptide is Ribosome-recycling factor (Coprothermobacter proteolyticus (strain ATCC 35245 / DSM 5265 / OCM 4 / BT)).